We begin with the raw amino-acid sequence, 347 residues long: UPF0284 protein M164_0030 (347 aa).

This sequence belongs to the UPF0284 family.

The chain is UPF0284 protein M164_0030 from Saccharolobus islandicus (strain M.16.4 / Kamchatka #3) (Sulfolobus islandicus).